The chain runs to 132 residues: ATP synthase epsilon chain (132 aa).

This sequence belongs to the ATPase epsilon chain family. F-type ATPases have 2 components, CF(1) - the catalytic core - and CF(0) - the membrane proton channel. CF(1) has five subunits: alpha(3), beta(3), gamma(1), delta(1), epsilon(1). CF(0) has three main subunits: a, b and c.

The protein localises to the cell membrane. Produces ATP from ADP in the presence of a proton gradient across the membrane. This Brevibacillus brevis (strain 47 / JCM 6285 / NBRC 100599) protein is ATP synthase epsilon chain.